The primary structure comprises 78 residues: RNA-binding protein KhpA (78 aa).

Positions 29 to 78 constitute a KH domain; the sequence is TIIYELSVAKPDIGKIIGKEGRTIKAIRTLLVSVASRNNVRVSLEIMEEK.

This sequence belongs to the KhpA RNA-binding protein family.

It localises to the cytoplasm. In terms of biological role, a probable RNA-binding protein. This Chlamydia pneumoniae (Chlamydophila pneumoniae) protein is RNA-binding protein KhpA.